We begin with the raw amino-acid sequence, 959 residues long: DNA polymerase 1 (959 aa).

The tract at residues 1–110 (MRVRGGQEAA…LTLEPSPQSE (110 aa)) is disordered. Residues 44-60 (KKPEPPPTLHREREPES) are compositionally biased toward basic and acidic residues.

Belongs to the DNA polymerase type-B family.

The catalysed reaction is DNA(n) + a 2'-deoxyribonucleoside 5'-triphosphate = DNA(n+1) + diphosphate. In Aeropyrum pernix (strain ATCC 700893 / DSM 11879 / JCM 9820 / NBRC 100138 / K1), this protein is DNA polymerase 1 (polA).